The sequence spans 83 residues: Cytochrome b559 subunit alpha (83 aa).

The helical transmembrane segment at 21–35 (VIHSITIPSLFIAGW) threads the bilayer. Histidine 23 contacts heme.

The protein belongs to the PsbE/PsbF family. As to quaternary structure, heterodimer of an alpha subunit and a beta subunit. PSII is composed of 1 copy each of membrane proteins PsbA, PsbB, PsbC, PsbD, PsbE, PsbF, PsbH, PsbI, PsbJ, PsbK, PsbL, PsbM, PsbT, PsbX, PsbY, PsbZ, Psb30/Ycf12, at least 3 peripheral proteins of the oxygen-evolving complex and a large number of cofactors. It forms dimeric complexes. Heme b is required as a cofactor.

Its subcellular location is the plastid. It localises to the chloroplast thylakoid membrane. Functionally, this b-type cytochrome is tightly associated with the reaction center of photosystem II (PSII). PSII is a light-driven water:plastoquinone oxidoreductase that uses light energy to abstract electrons from H(2)O, generating O(2) and a proton gradient subsequently used for ATP formation. It consists of a core antenna complex that captures photons, and an electron transfer chain that converts photonic excitation into a charge separation. This is Cytochrome b559 subunit alpha from Acorus calamus (Sweet flag).